The sequence spans 147 residues: Large ribosomal subunit protein uL22c (147 aa).

It belongs to the universal ribosomal protein uL22 family. In terms of assembly, part of the 50S ribosomal subunit.

The protein resides in the plastid. It localises to the chloroplast. Its function is as follows. This protein binds specifically to 23S rRNA. Functionally, the globular domain of the protein is located near the polypeptide exit tunnel on the outside of the subunit, while an extended beta-hairpin is found that lines the wall of the exit tunnel in the center of the 70S ribosome. This chain is Large ribosomal subunit protein uL22c (rpl22), found in Lolium perenne (Perennial ryegrass).